The following is a 624-amino-acid chain: Pentatricopeptide repeat-containing protein At2g32630 (624 aa).

PPR repeat units lie at residues 153 to 187 (FEKF…GLSI), 188 to 222 (DERS…GVKI), 223 to 257 (TVYS…GIKP), 258 to 292 (EAYT…GVVY), 293 to 327 (NKVT…GIES), 328 to 362 (DVHV…GLSP), 363 to 397 (SSYT…GVNI), 398 to 432 (TQVV…GFQA), 433 to 467 (DVFT…GVKL), 468 to 502 (STVS…GVQP), 503 to 537 (NAIT…GMDP), 538 to 572 (DSYT…GLDQ), and 573 to 607 (NSVT…GYTI).

Belongs to the PPR family. P subfamily.

The chain is Pentatricopeptide repeat-containing protein At2g32630 from Arabidopsis thaliana (Mouse-ear cress).